The following is a 130-amino-acid chain: Small ribosomal subunit protein uS11 (130 aa).

The protein belongs to the universal ribosomal protein uS11 family. Part of the 30S ribosomal subunit. Interacts with proteins S7 and S18. Binds to IF-3.

Its function is as follows. Located on the platform of the 30S subunit, it bridges several disparate RNA helices of the 16S rRNA. Forms part of the Shine-Dalgarno cleft in the 70S ribosome. The polypeptide is Small ribosomal subunit protein uS11 (Xylella fastidiosa (strain M12)).